The primary structure comprises 144 residues: Large ribosomal subunit protein uL16 (144 aa).

A compositionally biased stretch (basic residues) spans 1–19; it reads MLLPKRVKYRRQHRPKTTG. The interval 1-23 is disordered; it reads MLLPKRVKYRRQHRPKTTGRSKG.

Belongs to the universal ribosomal protein uL16 family. In terms of assembly, part of the 50S ribosomal subunit.

Binds 23S rRNA and is also seen to make contacts with the A and possibly P site tRNAs. The polypeptide is Large ribosomal subunit protein uL16 (Staphylococcus epidermidis (strain ATCC 35984 / DSM 28319 / BCRC 17069 / CCUG 31568 / BM 3577 / RP62A)).